The primary structure comprises 362 residues: Cationic peroxidase SPC4 (362 aa).

The signal sequence occupies residues methionine 1–asparagine 31. Intrachain disulfides connect cysteine 50–cysteine 131, cysteine 83–cysteine 88, cysteine 138–cysteine 333, and cysteine 218–cysteine 245. Histidine 81 serves as the catalytic Proton acceptor. Residues aspartate 82, valine 85, glycine 87, aspartate 89, and serine 91 each contribute to the Ca(2+) site. Residue asparagine 109 is glycosylated (N-linked (GlcNAc...) asparagine). Threonine 111 is a binding site for (indol-3-yl)acetate. Position 181 (proline 181) interacts with substrate. Residue histidine 211 participates in heme b binding. Residue threonine 212 coordinates Ca(2+). A glycan (N-linked (GlcNAc...) asparagine) is linked at asparagine 234. Ca(2+) contacts are provided by aspartate 257, threonine 260, alanine 263, and aspartate 265. The N-linked (GlcNAc...) asparagine glycan is linked to asparagine 332.

This sequence belongs to the peroxidase family. Classical plant (class III) peroxidase subfamily. In terms of assembly, monomer. The cofactor is heme b. Ca(2+) is required as a cofactor. Post-translationally, the proportions of glycoforms I and II are 35% and 65% respectively. As to expression, present in germinated and ungerminated grain, seedlings, and leaves and stem of the mature plant.

The protein resides in the secreted. The catalysed reaction is 2 a phenolic donor + H2O2 = 2 a phenolic radical donor + 2 H2O. Its function is as follows. Removal of H(2)O(2), oxidation of toxic reductants, biosynthesis and degradation of lignin, suberization, auxin catabolism, response to environmental stresses such as wounding, pathogen attack and oxidative stress. These functions might be dependent on each isozyme/isoform in each plant tissue. Has a high preference for hydroxycinnamates as substrates. Substrate preference is ferulic acid &gt; p-coumaric acid &gt; N-acetyl tyrosine methyl ester &gt; N-acetyl-tyrosine &gt; tyrosine &gt; catechol &gt; Gly-Tyr-Gly. May be involved in the formation of diferulate linkages in the plant cell wall. The protein is Cationic peroxidase SPC4 of Sorghum bicolor (Sorghum).